Consider the following 139-residue polypeptide: Large ribosomal subunit protein uL24 (139 aa).

The disordered stretch occupies residues Met-1–Glu-25.

The protein belongs to the universal ribosomal protein uL24 family.

The protein is Large ribosomal subunit protein uL24 (rpl26) of Dictyostelium discoideum (Social amoeba).